The following is a 154-amino-acid chain: Protein phosphatase 1 regulatory subunit 27 (154 aa).

ANK repeat units follow at residues 63–92 (SGLA…DIHQ) and 96–125 (TGWT…DRDA).

As to quaternary structure, interacts with DYSF and PPP1CA.

In terms of biological role, inhibits phosphatase activity of protein phosphatase 1 (PP1) complexes. The chain is Protein phosphatase 1 regulatory subunit 27 (Ppp1r27) from Mus musculus (Mouse).